A 381-amino-acid chain; its full sequence is NF-kappa-B inhibitor-like protein 1 (381 aa).

The disordered stretch occupies residues 1–34; that stretch reads MSNPSPQVPEEEASTSVCRPKSSMASTSRRQRRE. ANK repeat units lie at residues 64-93 and 97-133; these read GQPP…DPAH and HGDT…IKNK. Disordered stretches follow at residues 131–167, 186–242, and 256–294; these read KNKD…EWRQ, GDAS…QEEE, and ELRE…RGSL. The residue at position 150 (S150) is a Phosphoserine. Residues 150–159 show a composition bias toward acidic residues; it reads SAEEEEEDDA. Over residues 256–287 the composition is skewed to basic and acidic residues; the sequence is ELRESRARRAQEALGDREPKPARAGPRAEHPR.

As to quaternary structure, interacts with CACTIN (via N-terminal domain); the interaction occurs in a pro-inflammatory-independent manner.

Its subcellular location is the nucleus. Its function is as follows. Involved in the regulation of innate immune response. Acts as negative regulator of Toll-like receptor and interferon-regulatory factor (IRF) signaling pathways. Contributes to the negative regulation of transcriptional activation of NF-kappa-B target genes in response to endogenous pro-inflammatory stimuli. In Macaca mulatta (Rhesus macaque), this protein is NF-kappa-B inhibitor-like protein 1 (NFKBIL1).